Here is a 76-residue protein sequence, read N- to C-terminus: Theta defensin subunit C (76 aa).

A signal peptide spans Met1–Ala22. The propeptide occupies Arg23–Leu64. Arg65 is covalently cross-linked (Cyclopeptide (Arg-Cys) (interchain with C-73 in subunit A); in form BTD-4). Cys68 and Cys73 form a disulfide bridge. Cys73 participates in a covalent cross-link: Cyclopeptide (Cys-Arg) (interchain with R-65 in subunit A); in form BTD-4. Positions Arg74–Leu76 are excised as a propeptide.

This sequence belongs to the alpha-defensin family. Theta subfamily. In terms of assembly, BTD-4 is a cyclic heterodimer composed of subunits A and C; disulfide-linked. Post-translationally, forms a cyclic peptide with subunit A (BTD-4). An additional intersubunit disulfide bond is formed.

BTD-4 has antimicrobial activity against the Gram-negative bacterium E.coli ML35, the Gram-positive bacterium S.aureus 502a, and the fungus C.albicans 16820. In Papio anubis (Olive baboon), this protein is Theta defensin subunit C (BTDC).